The chain runs to 194 residues: MTAIQLIVGLGNPGAEYEQTRHNAGAFFVERIAAAQRVNLVPERKFFGLTGRFTHQGQDVRLLIPTTYMNRSGQAVAALAGFYRIPVESILVAHDELDLPPGVAKLKVGGGHGGHNGLRDIIAQLGNQNTFHRLRLGIGHPGDASKVSGFVLGRAPRAEQEKLDASIDFALGVLPDIFAGEWNRAMKNLHSQKA.

Tyr17 serves as a coordination point for tRNA. The Proton acceptor role is filled by His22. 3 residues coordinate tRNA: Tyr68, Asn70, and Asn116.

It belongs to the PTH family. Monomer.

Its subcellular location is the cytoplasm. The enzyme catalyses an N-acyl-L-alpha-aminoacyl-tRNA + H2O = an N-acyl-L-amino acid + a tRNA + H(+). Hydrolyzes ribosome-free peptidyl-tRNAs (with 1 or more amino acids incorporated), which drop off the ribosome during protein synthesis, or as a result of ribosome stalling. Functionally, catalyzes the release of premature peptidyl moieties from peptidyl-tRNA molecules trapped in stalled 50S ribosomal subunits, and thus maintains levels of free tRNAs and 50S ribosomes. In Pseudomonas savastanoi pv. phaseolicola (strain 1448A / Race 6) (Pseudomonas syringae pv. phaseolicola (strain 1448A / Race 6)), this protein is Peptidyl-tRNA hydrolase.